The sequence spans 325 residues: tRNA dimethylallyltransferase (325 aa).

12–19 (GPTASGKT) contributes to the ATP binding site. Residue 14-19 (TASGKT) participates in substrate binding. 3 interaction with substrate tRNA regions span residues 37–40 (DSAL), 161–165 (QRIHR), and 244–249 (RCVGYR).

This sequence belongs to the IPP transferase family. Monomer. Mg(2+) serves as cofactor.

It carries out the reaction adenosine(37) in tRNA + dimethylallyl diphosphate = N(6)-dimethylallyladenosine(37) in tRNA + diphosphate. Its function is as follows. Catalyzes the transfer of a dimethylallyl group onto the adenine at position 37 in tRNAs that read codons beginning with uridine, leading to the formation of N6-(dimethylallyl)adenosine (i(6)A). This chain is tRNA dimethylallyltransferase, found in Chromobacterium violaceum (strain ATCC 12472 / DSM 30191 / JCM 1249 / CCUG 213 / NBRC 12614 / NCIMB 9131 / NCTC 9757 / MK).